The primary structure comprises 247 residues: Uridylate kinase (247 aa).

An ATP-binding site is contributed by 17-20 (KFSG). Glycine 59 is a binding site for UMP. ATP contacts are provided by glycine 60 and arginine 64. UMP contacts are provided by residues aspartate 79 and 140–147 (TGNPFFTT). 3 residues coordinate ATP: threonine 167, tyrosine 173, and aspartate 176.

This sequence belongs to the UMP kinase family. In terms of assembly, homohexamer.

It localises to the cytoplasm. The enzyme catalyses UMP + ATP = UDP + ADP. It functions in the pathway pyrimidine metabolism; CTP biosynthesis via de novo pathway; UDP from UMP (UMPK route): step 1/1. Its activity is regulated as follows. Inhibited by UTP. In terms of biological role, catalyzes the reversible phosphorylation of UMP to UDP. This chain is Uridylate kinase, found in Legionella pneumophila (strain Lens).